The following is a 439-amino-acid chain: Membrane sensor protein UhpC (439 aa).

The Cytoplasmic portion of the chain corresponds to 1–25 (MLPFLKAPADAPLMTDKYEIDARYR). Residues 26 to 45 (YWRRHILLTIWLGYALFYFT) traverse the membrane as a helical segment. At 46–66 (RKSFNAAVPEILANGVLSRSD) the chain is on the periplasmic side. The chain crosses the membrane as a helical span at residues 67–87 (IGLLATLFYITYGVSKFVSGI). The Cytoplasmic portion of the chain corresponds to 88-95 (VSDRSNAR). Residues 96-118 (YFMGIGLIATGIINILFGFSTSL) form a helical membrane-spanning segment. The Periplasmic segment spans residues 119-121 (WAF). A helical transmembrane segment spans residues 122–144 (AVLWVLNAFFQGWGSPVCARLLT). Residues 145–162 (AWYSRTERGGWWALWNTA) lie on the Cytoplasmic side of the membrane. The chain crosses the membrane as a helical span at residues 163–183 (HNVGGALIPIVMAAAALHYGW). Arginine 184 is a topological domain (periplasmic). The chain crosses the membrane as a helical span at residues 185–205 (AGMMIAGCMAIVVGIFLCWRL). At 206 to 244 (RDRPQALGLPAVGEWRHDALEIAQQQEGAGLTRKEILTK) the chain is on the cytoplasmic side. Residues 245–265 (YVLLNPYIWLLSFCYVLVYVV) traverse the membrane as a helical segment. The Periplasmic portion of the chain corresponds to 266 to 289 (RAAINDWGNLYMSETLGVDLVTAN). A helical transmembrane segment spans residues 290–310 (TAVTMFELGGFIGALVAGWGS). At 311-322 (DKLFNGNRGPMN) the chain is on the cytoplasmic side. Residues 323 to 343 (LIFAAGILLSVGSLWLMPFAS) form a helical membrane-spanning segment. Residues 344-349 (YVMQAT) lie on the Periplasmic side of the membrane. A helical transmembrane segment spans residues 350-370 (CFFTIGFFVFGPQMLIGMAAA). The Cytoplasmic portion of the chain corresponds to 371-379 (ECSHKEAAG). A helical membrane pass occupies residues 380–400 (AATGFVGLFAYLGASLAGWPL). Residues 401-410 (AKVLDTWHWS) lie on the Periplasmic side of the membrane. Residues 411-431 (GFFVVISIAAGISALLLLPFL) traverse the membrane as a helical segment. At 432-439 (NAQTPREA) the chain is on the cytoplasmic side.

It belongs to the major facilitator superfamily. Organophosphate:Pi antiporter (OPA) (TC 2.A.1.4) family.

It localises to the cell inner membrane. Functionally, part of the UhpABC signaling cascade that controls the expression of the hexose phosphate transporter UhpT. UhpC senses external glucose-6-phosphate and interacts with the histidine kinase UhpB, leading to the stimulation of the autokinase activity of UhpB. This is Membrane sensor protein UhpC from Escherichia coli (strain K12).